The primary structure comprises 326 residues: Bifunctional pinoresinol-lariciresinol reductase (326 aa).

Residues 25–31 (GGTGYLG), Arg50, and Lys59 each bind NADP(+). Lys153 (proton acceptor) is an active-site residue. Position 157 (Arg157) interacts with NADP(+). Position 285 (His285) interacts with substrate.

Belongs to the NmrA-type oxidoreductase family. Isoflavone reductase subfamily. Dimer.

It catalyses the reaction (+)-lariciresinol + NADP(+) = (+)-pinoresinol + NADPH + H(+). The catalysed reaction is (-)-secoisolariciresinol + NADP(+) = (+)-lariciresinol + NADPH + H(+). Its function is as follows. Reductase involved in lignan biosynthesis. Catalyzes the enantioselective conversion of (+)-pinoresinol into (+)-lariciresinol and of (+)-lariciresinol into (-)-secoisolariciresinol. Abstracts the 4R-hydride from the NADPH cofactor during catalysis. The sequence is that of Bifunctional pinoresinol-lariciresinol reductase (PLR1) from Linum album (Flax).